The chain runs to 338 residues: 5-dehydro-2-deoxygluconokinase (338 aa).

It belongs to the carbohydrate kinase PfkB family.

The catalysed reaction is 5-dehydro-2-deoxy-D-gluconate + ATP = 6-phospho-5-dehydro-2-deoxy-D-gluconate + ADP + H(+). It participates in polyol metabolism; myo-inositol degradation into acetyl-CoA; acetyl-CoA from myo-inositol: step 5/7. Catalyzes the phosphorylation of 5-dehydro-2-deoxy-D-gluconate (2-deoxy-5-keto-D-gluconate or DKG) to 6-phospho-5-dehydro-2-deoxy-D-gluconate (DKGP). In Mesomycoplasma hyopneumoniae (strain 7448) (Mycoplasma hyopneumoniae), this protein is 5-dehydro-2-deoxygluconokinase.